A 364-amino-acid polypeptide reads, in one-letter code: Autophagy-related protein 5 (364 aa).

Residues 1 to 13 (MASPNPYSYSPQL) show a composition bias toward polar residues. Residues 1-103 (MASPNPYSYS…SLPPKPKPSS (103 aa)) are disordered. Residues 28–42 (SSPSFRSTPFRSSRG) show a composition bias toward low complexity. Positions 43-53 (TGAGTGIGLGL) are enriched in gly residues. A compositionally biased stretch (basic and acidic residues) spans 72-82 (RSGDGSHDDLP). Lysine 202 participates in a covalent cross-link: Glycyl lysine isopeptide (Lys-Gly) (interchain with G-Cter in ATG12). The interval 262–306 (PSSPSPPSSDQQQPQRPGGSSSSGSYRVMQTLVPPRGPNNRTPQT) is disordered. Positions 269 to 286 (SSDQQQPQRPGGSSSSGS) are enriched in low complexity.

It belongs to the ATG5 family. As to quaternary structure, conjugated with atg12. Conjugated to atg12; which is essential for autophagy.

Its subcellular location is the preautophagosomal structure membrane. Functionally, involved in cytoplasm to vacuole transport (Cvt) and autophagic vesicle formation. Autophagy is essential for maintenance of amino acid levels and protein synthesis under nitrogen starvation. Required for selective autophagic degradation of the nucleus (nucleophagy). Also required for mitophagy, which eliminates defective or superfluous mitochondria in order to fulfill cellular energy requirements and prevent excess ROS production. Conjugation with atg12, through a ubiquitin-like conjugating system involving apg-5/atg7 as an E1-like activating enzyme and atg10 as an E2-like conjugating enzyme, is essential for its function. The atg12-apg-4/atg5 conjugate acts as an E3-like enzyme which is required for lipidation of apg-6/atg8 and apg-6/atg8 association to the vesicle membranes. The polypeptide is Autophagy-related protein 5 (apg-4) (Neurospora crassa (strain ATCC 24698 / 74-OR23-1A / CBS 708.71 / DSM 1257 / FGSC 987)).